The chain runs to 467 residues: Probable amino acid permease 7 (467 aa).

Over 1–29 (MDIKEDDESRVITPTELQLHDSVTARTGT) the chain is Cytoplasmic. The chain crosses the membrane as a helical span at residues 30 to 50 (LWTAVAHIITGVIGAGVLSLA). Over 51-58 (WATAELGW) the chain is Extracellular. Residues 59 to 79 (IAGPAALIAFAGVTLLSAFLL) form a helical membrane-spanning segment. At 80-111 (SDCYRFPDPNNGPLRLNSYSQAVKLYLGKKNE) the chain is on the cytoplasmic side. Residues 112–132 (IVCGVVVYISLFGCGIAYTIV) traverse the membrane as a helical segment. Residues 133–163 (IATCSRAIMKSNCYHRNGHNATCSYGDNNNY) lie on the Extracellular side of the membrane. A run of 2 helical transmembrane segments spans residues 164–184 (FMVL…FHNM) and 185–205 (VWLS…GIGL). Residues 206–231 (ALGKIIENRKIEGSIRGIPAENRGEK) are Extracellular-facing. A helical transmembrane segment spans residues 232–252 (VWIVFQALGNIAFSYPFSIIL). Topologically, residues 253 to 274 (LEIQDTLRSPPAEKQTMKKAST) are cytoplasmic. A helical membrane pass occupies residues 275–295 (VAVFIQTFFFFCCGCFGYAAF). Residues 296–312 (GDSTPGNLLTGFGFYEP) lie on the Extracellular side of the membrane. A helical transmembrane segment spans residues 313-333 (FWLVDFANACIVLHLVGGYQV). At 334-383 (YSQPIFAAAERSLTKKYPENKFIARFYGFKLPLLRGETVRLNPMRMCLRT) the chain is on the cytoplasmic side. A run of 2 helical transmembrane segments spans residues 384–404 (MYVL…EVLG) and 405–425 (VVGA…MCIL). Residues 426-443 (QKKIRSWTRPWLLLRGFS) lie on the Cytoplasmic side of the membrane. The chain crosses the membrane as a helical span at residues 444 to 464 (FVCLLVCLLSLVGSIYGLVGA). The Extracellular portion of the chain corresponds to 465-467 (KFG).

It belongs to the amino acid/polyamine transporter 2 family. Amino acid/auxin permease (AAAP) (TC 2.A.18.2) subfamily.

It localises to the cell membrane. Functionally, amino acid-proton symporter. Stereospecific transporter with a broad specificity for neutral amino acids. This Arabidopsis thaliana (Mouse-ear cress) protein is Probable amino acid permease 7 (AAP7).